A 268-amino-acid polypeptide reads, in one-letter code: Orotidine 5'-phosphate decarboxylase (268 aa).

Residues aspartate 37, 59-61 (KTH), 91-100 (DRKFADIGNT), tyrosine 217, and arginine 235 each bind substrate. Lysine 93 acts as the Proton donor in catalysis.

This sequence belongs to the OMP decarboxylase family.

It catalyses the reaction orotidine 5'-phosphate + H(+) = UMP + CO2. The protein operates within pyrimidine metabolism; UMP biosynthesis via de novo pathway; UMP from orotate: step 2/2. In Maudiozyma exigua (Yeast), this protein is Orotidine 5'-phosphate decarboxylase (URA4).